We begin with the raw amino-acid sequence, 163 residues long: SsrA-binding protein (163 aa).

Belongs to the SmpB family.

It localises to the cytoplasm. Required for rescue of stalled ribosomes mediated by trans-translation. Binds to transfer-messenger RNA (tmRNA), required for stable association of tmRNA with ribosomes. tmRNA and SmpB together mimic tRNA shape, replacing the anticodon stem-loop with SmpB. tmRNA is encoded by the ssrA gene; the 2 termini fold to resemble tRNA(Ala) and it encodes a 'tag peptide', a short internal open reading frame. During trans-translation Ala-aminoacylated tmRNA acts like a tRNA, entering the A-site of stalled ribosomes, displacing the stalled mRNA. The ribosome then switches to translate the ORF on the tmRNA; the nascent peptide is terminated with the 'tag peptide' encoded by the tmRNA and targeted for degradation. The ribosome is freed to recommence translation, which seems to be the essential function of trans-translation. The sequence is that of SsrA-binding protein from Shewanella baltica (strain OS223).